A 296-amino-acid polypeptide reads, in one-letter code: Nucleotide-binding protein SSA_0810 (296 aa).

13 to 20 (GMSGAGKT) is a binding site for ATP. Residue 63–66 (DMRS) participates in GTP binding. The interval 277 to 296 (WPVNSSHRDKNRRKETVNRS) is disordered. The segment covering 282–296 (SHRDKNRRKETVNRS) has biased composition (basic and acidic residues).

Belongs to the RapZ-like family.

Functionally, displays ATPase and GTPase activities. In Streptococcus sanguinis (strain SK36), this protein is Nucleotide-binding protein SSA_0810.